The primary structure comprises 304 residues: RING-H2 finger protein ATL2 (304 aa).

A helical transmembrane segment spans residues Ile-30 to Leu-50. An RING-type; atypical zinc finger spans residues Cys-119–Arg-161. The disordered stretch occupies residues Glu-194–Arg-304. Positions Val-227–Ser-244 are enriched in basic and acidic residues. A compositionally biased stretch (polar residues) spans Pro-283 to Glu-293. The span at Asp-295–Arg-304 shows a compositional bias: basic and acidic residues.

Belongs to the RING-type zinc finger family. ATL subfamily. Preferentially expressed around the apical meristem region.

The protein resides in the membrane. It carries out the reaction S-ubiquitinyl-[E2 ubiquitin-conjugating enzyme]-L-cysteine + [acceptor protein]-L-lysine = [E2 ubiquitin-conjugating enzyme]-L-cysteine + N(6)-ubiquitinyl-[acceptor protein]-L-lysine.. The protein operates within protein modification; protein ubiquitination. In terms of biological role, may be involved in the early steps of the plant defense signaling pathway. The polypeptide is RING-H2 finger protein ATL2 (ATL2) (Arabidopsis thaliana (Mouse-ear cress)).